The following is a 117-amino-acid chain: MSAPQTFVPEPVQVTENALAKVKALIEEEGNPDLKLRVFVTGGGCSGFQYGFAFDEACAEDDAKIERDGVTVVVDAMSYPYLVGAQVDYEEGLKGSKFVVANPNASTTCGCGSSFSI.

Iron-sulfur cluster is bound by residues cysteine 45, cysteine 109, and cysteine 111.

This sequence belongs to the HesB/IscA family. As to quaternary structure, homodimer. Iron-sulfur cluster serves as cofactor.

In terms of biological role, required for insertion of 4Fe-4S clusters for at least IspG. This chain is Iron-sulfur cluster insertion protein ErpA, found in Saccharophagus degradans (strain 2-40 / ATCC 43961 / DSM 17024).